Reading from the N-terminus, the 249-residue chain is Diaminopimelate epimerase (249 aa).

Residues asparagine 11 and asparagine 60 each coordinate substrate. Residue cysteine 69 is the Proton donor of the active site. Residues 70-71, asparagine 164, and 182-183 each bind substrate; these read GN and ER. The active-site Proton acceptor is the cysteine 192. 193–194 lines the substrate pocket; sequence GT.

It belongs to the diaminopimelate epimerase family. As to quaternary structure, homodimer.

It is found in the cytoplasm. It carries out the reaction (2S,6S)-2,6-diaminopimelate = meso-2,6-diaminopimelate. The protein operates within amino-acid biosynthesis; L-lysine biosynthesis via DAP pathway; DL-2,6-diaminopimelate from LL-2,6-diaminopimelate: step 1/1. Catalyzes the stereoinversion of LL-2,6-diaminopimelate (L,L-DAP) to meso-diaminopimelate (meso-DAP), a precursor of L-lysine and an essential component of the bacterial peptidoglycan. This Campylobacter jejuni subsp. doylei (strain ATCC BAA-1458 / RM4099 / 269.97) protein is Diaminopimelate epimerase.